The chain runs to 114 residues: Hydrogenase maturation factor HypA (114 aa).

His-2 provides a ligand contact to Ni(2+). The Zn(2+) site is built by Cys-73, Cys-76, Cys-90, and Cys-93.

This sequence belongs to the HypA/HybF family.

In terms of biological role, involved in the maturation of [NiFe] hydrogenases. Required for nickel insertion into the metal center of the hydrogenase. The polypeptide is Hydrogenase maturation factor HypA (Klebsiella pneumoniae (strain 342)).